Reading from the N-terminus, the 585-residue chain is Arginine--tRNA ligase (585 aa).

Positions 131–141 (ANPTGPMHVGH) match the 'HIGH' region motif.

This sequence belongs to the class-I aminoacyl-tRNA synthetase family. Monomer.

The protein localises to the cytoplasm. The catalysed reaction is tRNA(Arg) + L-arginine + ATP = L-arginyl-tRNA(Arg) + AMP + diphosphate. In Agrobacterium fabrum (strain C58 / ATCC 33970) (Agrobacterium tumefaciens (strain C58)), this protein is Arginine--tRNA ligase.